The sequence spans 261 residues: Ethanolamine ammonia-lyase small subunit (261 aa).

Positions 158, 179, and 208 each coordinate adenosylcob(III)alamin.

Belongs to the EutC family. The basic unit is a heterodimer which dimerizes to form tetramers. The heterotetramers trimerize; 6 large subunits form a core ring with 6 small subunits projecting outwards. It depends on adenosylcob(III)alamin as a cofactor.

The protein localises to the bacterial microcompartment. The enzyme catalyses ethanolamine = acetaldehyde + NH4(+). It participates in amine and polyamine degradation; ethanolamine degradation. Catalyzes the deamination of various vicinal amino-alcohols to oxo compounds. Allows this organism to utilize ethanolamine as the sole source of nitrogen and carbon in the presence of external vitamin B12. This chain is Ethanolamine ammonia-lyase small subunit, found in Bradyrhizobium diazoefficiens (strain JCM 10833 / BCRC 13528 / IAM 13628 / NBRC 14792 / USDA 110).